Reading from the N-terminus, the 223-residue chain is Ribonuclease 3 (223 aa).

The RNase III domain occupies 4-127 (YSQLEKRLNY…IIGAVYLEAG (124 aa)). Residue Glu40 coordinates Mg(2+). Residue Asp44 is part of the active site. Mg(2+) is bound by residues Asn113 and Glu116. Glu116 is a catalytic residue. Residues 154-223 (DYKTALQELT…AKIALEALKK (70 aa)) form the DRBM domain.

It belongs to the ribonuclease III family. In terms of assembly, homodimer. It depends on Mg(2+) as a cofactor.

It localises to the cytoplasm. It carries out the reaction Endonucleolytic cleavage to 5'-phosphomonoester.. Digests double-stranded RNA. Involved in the processing of primary rRNA transcript to yield the immediate precursors to the large and small rRNAs (23S and 16S). Processes some mRNAs, and tRNAs when they are encoded in the rRNA operon. Processes pre-crRNA and tracrRNA of type II CRISPR loci if present in the organism. This is Ribonuclease 3 from Sulfurovum sp. (strain NBC37-1).